Here is a 413-residue protein sequence, read N- to C-terminus: uncharacterized protein (413 aa).

A signal peptide spans 1–22 (MKKSKASALLWLFSLVGFMLHA).

The protein localises to the periplasm. Its function is as follows. May be involved in ulvan degradation. Ulvan is the main polysaccharide component of the Ulvales (green seaweed) cell wall. It is composed of disaccharide building blocks comprising 3-sulfated rhamnose (Rha3S) linked to D-glucuronic acid (GlcA), L-iduronic acid (IduA), or D-xylose (Xyl). This is an uncharacterized protein from Formosa agariphila (strain DSM 15362 / KCTC 12365 / LMG 23005 / KMM 3901 / M-2Alg 35-1).